The primary structure comprises 228 residues: 30 kDa heat shock protein (228 aa).

Disordered stretches follow at residues 34–53 (EVQG…PTRT), 117–136 (KGEP…DVDE), and 144–174 (TATG…APAE). The sHSP domain maps to 49–228 (QPTRTFSPKF…KHETIRIAIN (180 aa)). Low complexity predominate over residues 144 to 158 (TATGANNQNNQQVAQ).

Belongs to the small heat shock protein (HSP20) family.

The protein resides in the cytoplasm. The polypeptide is 30 kDa heat shock protein (hsp30) (Neurospora crassa (strain ATCC 24698 / 74-OR23-1A / CBS 708.71 / DSM 1257 / FGSC 987)).